The sequence spans 352 residues: Photosystem II D2 protein (352 aa).

The residue at position 2 (T2) is an N-acetylthreonine. The residue at position 2 (T2) is a Phosphothreonine. A helical membrane pass occupies residues 40-60 (CAYFALGGWLTGTTFVSSWYT). H117 serves as a coordination point for chlorophyll a. The chain crosses the membrane as a helical span at residues 124–140 (GFMLRQFEIARAVQIRP). 2 residues coordinate pheophytin a: Q129 and N142. A helical transmembrane segment spans residues 152 to 165 (VFVSVFLIYPLGQS). H197 lines the chlorophyll a pocket. A helical transmembrane segment spans residues 207–227 (AALLCAIHGATVENTLFEDGD). The a plastoquinone site is built by H214 and F261. Residue H214 coordinates Fe cation. H268 is a Fe cation binding site. The helical transmembrane segment at 278 to 294 (GLWMSALGVVGLALNLR) threads the bilayer.

Belongs to the reaction center PufL/M/PsbA/D family. As to quaternary structure, PSII is composed of 1 copy each of membrane proteins PsbA, PsbB, PsbC, PsbD, PsbE, PsbF, PsbH, PsbI, PsbJ, PsbK, PsbL, PsbM, PsbT, PsbX, PsbY, PsbZ, Psb30/Ycf12, at least 3 peripheral proteins of the oxygen-evolving complex and a large number of cofactors. It forms dimeric complexes. The D1/D2 heterodimer binds P680, chlorophylls that are the primary electron donor of PSII, and subsequent electron acceptors. It shares a non-heme iron and each subunit binds pheophytin, quinone, additional chlorophylls, carotenoids and lipids. There is also a Cl(-1) ion associated with D1 and D2, which is required for oxygen evolution. The PSII complex binds additional chlorophylls, carotenoids and specific lipids. is required as a cofactor.

It is found in the plastid. Its subcellular location is the chloroplast thylakoid membrane. It catalyses the reaction 2 a plastoquinone + 4 hnu + 2 H2O = 2 a plastoquinol + O2. Photosystem II (PSII) is a light-driven water:plastoquinone oxidoreductase that uses light energy to abstract electrons from H(2)O, generating O(2) and a proton gradient subsequently used for ATP formation. It consists of a core antenna complex that captures photons, and an electron transfer chain that converts photonic excitation into a charge separation. The D1/D2 (PsbA/PsbD) reaction center heterodimer binds P680, the primary electron donor of PSII as well as several subsequent electron acceptors. D2 is needed for assembly of a stable PSII complex. The sequence is that of Photosystem II D2 protein from Ostreococcus tauri.